Reading from the N-terminus, the 624-residue chain is Galactan 5-O-arabinofuranosyltransferase (624 aa).

Helical transmembrane passes span 5–25 (VLGQMVLAVLMASAVAGVAIA), 43–63 (ALTTVGQFGCLAGLFAAGLLW), 73–93 (LGALAFISAFSVVTLAMPLGA), 127–147 (IGLPPFYPAGWFWLGGRIAAA), 159–179 (WSIVSITIAVALALVLWAAMI), 181–201 (FEYALVATAASTAAMLAYAST), 203–223 (PYAAIITVLMPPVFVLAWAGL), 234–254 (AIVGVGIFLGVAALFYTLLLV), 280–300 (LAVIAVISGAIALLTWAPYLL), 326–346 (FPMFSLTLHGALCMLGTVWLV), 355–375 (AGALAVAVVAVYAWSLLSMLT), 391–411 (LTVLLTTAGAFGFIEATLAIA), and 422–442 (VVAAATAVGAIGAVTFSQDIP).

This sequence belongs to the glycosyltransferase 85 family.

The protein resides in the cell membrane. It carries out the reaction Adds an alpha-D-arabinofuranosyl group from trans,octacis-decaprenylphospho-beta-D-arabinofuranose at the 5-O-position of the eighth, tenth and twelfth galactofuranose unit of the galactofuranan chain of [beta-D-galactofuranosyl-(1-&gt;5)-beta-D-galactofuranosyl-(1-&gt;6)]14-beta-D-galactofuranosyl-(1-&gt;5)-beta-D-galactofuranosyl-(1-&gt;4)-alpha-L-rhamnopyranosyl-(1-&gt;3)-N-acetyl-alpha-D-glucosaminyl-diphospho-trans,octacis-decaprenol.. The protein operates within cell wall biogenesis; cell wall polysaccharide biosynthesis. Its function is as follows. Involved in the biosynthesis of the arabinogalactan (AG) region of the mycolylarabinogalactan-peptidoglycan (mAGP) complex, an essential component of the mycobacterial cell wall. Catalyzes the addition of the first key arabinofuranosyl (Araf) residue from the sugar donor decaprenyl-phospho-arabinose (DPA) on the C-5 of a 6-linked galactofuranosyl (Galf) of the galactan domain, thus 'priming' the galactan for further elaboration by other arabinofuranosyltransferases. It is not able to add an Araf residue to a terminal Galf. The polypeptide is Galactan 5-O-arabinofuranosyltransferase (Mycolicibacterium smegmatis (strain ATCC 700084 / mc(2)155) (Mycobacterium smegmatis)).